Consider the following 194-residue polypeptide: MSEIKLIVGLGNPGDKYADTRHNAGEWLIERLARRFNFNLSVESKFSGKTARAVISGQEMRFLVPTTFMNLSGKAVSALANFYRIPPEQILVLHDELDLPPGIAKLKQGGGHGGHNGLKDIIAQLANNKNFYRLRIGIGHPGDKNLVASYVLNKPSPTDWQLIDRTLDEATDCIEILMKEGITKATNRLNAFKA.

Tyr17 contributes to the tRNA binding site. The active-site Proton acceptor is the His22. TRNA-binding residues include Phe68, Asn70, and Asn116.

This sequence belongs to the PTH family. As to quaternary structure, monomer.

The protein resides in the cytoplasm. The catalysed reaction is an N-acyl-L-alpha-aminoacyl-tRNA + H2O = an N-acyl-L-amino acid + a tRNA + H(+). In terms of biological role, hydrolyzes ribosome-free peptidyl-tRNAs (with 1 or more amino acids incorporated), which drop off the ribosome during protein synthesis, or as a result of ribosome stalling. Catalyzes the release of premature peptidyl moieties from peptidyl-tRNA molecules trapped in stalled 50S ribosomal subunits, and thus maintains levels of free tRNAs and 50S ribosomes. This Histophilus somni (strain 2336) (Haemophilus somnus) protein is Peptidyl-tRNA hydrolase.